Here is a 575-residue protein sequence, read N- to C-terminus: MQQDDDFQNFVATLESFKDLKSGISGSRIKKLTTYALDHIDIESKIISLIIDYSRLCPDSHKLGSLYIIDSIGRAYLDETRSNSNSSSNKPGTCAHAINTLGEVIQELLSDAIAKSNQDHKEKIRMLLDIWDRSGLFQKSYLNAIRSKCFAMDISNNTANTASQQLSLDPKQRSKQILSNLKKSPPLNLNISLPTDLTSTDPAKQQAALFQVIAALQKHFKTLPSHTSVGTVAPPQAHTITEYGSRRERERERERYNSRRNRSRSPPAPFSQPSTGRKDRYPSVAQDQYSIGAPNTTFGTNNHHLYPDELNVSNNPHYRPKPVSYDSTLPPDHIKVYSRTLFIGGVPLNMKEWDLANVLKPFAEVQSVILNNSRKHAFVKVYSRHEAENVLQNFNKDGALPLRTRWGVGFGPRDCCDYQHGYSIIPMHRLTDADKKWSVSAQWGGTSGQPLVTGIVFEEPDIIVGEGVSSKAISQKMPTDSGRNGPRSGKPNKSGSISSISPVPYGNAPLASPPPQQYVQPMMQQPYGYAPNQPLPSQGPAAAAPPVPQQQFDPTAQLNSLMNMLNQQQQQQQQS.

In terms of domain architecture, CID spans 1-153 (MQQDDDFQNF…AIRSKCFAMD (153 aa)). The segment at 225–282 (SHTSVGTVAPPQAHTITEYGSRRERERERERYNSRRNRSRSPPAPFSQPSTGRKDRYP) is disordered. A compositionally biased stretch (basic and acidic residues) spans 244–257 (GSRRERERERERYN). Phosphoserine occurs at positions 263, 265, and 271. The 71-residue stretch at 339-409 (RTLFIGGVPL…LPLRTRWGVG (71 aa)) folds into the RRM domain. Residues 468–575 (VSSKAISQKM…NQQQQQQQQS (108 aa)) are disordered. 2 stretches are compositionally biased toward polar residues: residues 471–482 (KAISQKMPTDSG) and 491–501 (PNKSGSISSIS). Composition is skewed to low complexity over residues 517–527 (QYVQPMMQQPY) and 549–575 (QQQF…QQQS).

Its subcellular location is the nucleus. In terms of biological role, plays a role in sequence-specific regulation of nuclear pre-mRNA abundance. The sequence is that of Protein NRD1 (NRD1) from Saccharomyces cerevisiae (strain ATCC 204508 / S288c) (Baker's yeast).